We begin with the raw amino-acid sequence, 190 residues long: Nucleoside triphosphate pyrophosphatase (190 aa).

The Proton acceptor role is filled by Asp69.

This sequence belongs to the Maf family. The cofactor is a divalent metal cation.

It is found in the cytoplasm. It carries out the reaction a ribonucleoside 5'-triphosphate + H2O = a ribonucleoside 5'-phosphate + diphosphate + H(+). It catalyses the reaction a 2'-deoxyribonucleoside 5'-triphosphate + H2O = a 2'-deoxyribonucleoside 5'-phosphate + diphosphate + H(+). Its function is as follows. Nucleoside triphosphate pyrophosphatase. May have a dual role in cell division arrest and in preventing the incorporation of modified nucleotides into cellular nucleic acids. The chain is Nucleoside triphosphate pyrophosphatase from Helicobacter pylori (strain P12).